Consider the following 430-residue polypeptide: UDP-glucose 6-dehydrogenase AglM (430 aa).

Cysteine 269 is a catalytic residue.

Belongs to the UDP-glucose/GDP-mannose dehydrogenase family.

The enzyme catalyses UDP-alpha-D-glucose + 2 NAD(+) + H2O = UDP-alpha-D-glucuronate + 2 NADH + 3 H(+). The protein operates within nucleotide-sugar biosynthesis; UDP-alpha-D-glucuronate biosynthesis; UDP-alpha-D-glucuronate from UDP-alpha-D-glucose: step 1/1. It participates in cell surface structure biogenesis; S-layer biogenesis. Its activity is regulated as follows. Activity improves as salinity decreases. In terms of biological role, involved in the assembly of a N-linked pentasaccharide that decorates the S-layer glycoprotein and flagellins. Involved in the biosynthesis of the hexuronic acids found at both positions 2 and 3 of the pentasaccharide. The protein is UDP-glucose 6-dehydrogenase AglM (aglM) of Haloferax volcanii (strain ATCC 29605 / DSM 3757 / JCM 8879 / NBRC 14742 / NCIMB 2012 / VKM B-1768 / DS2) (Halobacterium volcanii).